The primary structure comprises 188 residues: HTH-type transcriptional regulator QacR (188 aa).

Residues Met-1–Trp-61 enclose the HTH tetR-type domain. Residues Thr-24 to Phe-43 constitute a DNA-binding region (H-T-H motif).

In terms of assembly, homodimer. Binds cooperatively to DNA as a pair of dimers.

Transcriptional repressor of qacA. Binds to IR1, an unusually long 28 bp operator, which is located downstream from the qacA promoter and overlaps its transcription start site. QacR is induced from its IR1 site by binding to one of many structurally dissimilar cationic lipophilic compounds, which are also substrates of QacA. In Staphylococcus aureus (strain Mu50 / ATCC 700699), this protein is HTH-type transcriptional regulator QacR (qacR).